The chain runs to 150 residues: Peptide deformylase (150 aa).

Positions 88 and 130 each coordinate Fe cation. Residue Glu131 is part of the active site. His134 is a binding site for Fe cation.

Belongs to the polypeptide deformylase family. Fe(2+) is required as a cofactor.

It carries out the reaction N-terminal N-formyl-L-methionyl-[peptide] + H2O = N-terminal L-methionyl-[peptide] + formate. Its function is as follows. Removes the formyl group from the N-terminal Met of newly synthesized proteins. Requires at least a dipeptide for an efficient rate of reaction. N-terminal L-methionine is a prerequisite for activity but the enzyme has broad specificity at other positions. This is Peptide deformylase from Desulfitobacterium hafniense (strain Y51).